The primary structure comprises 361 residues: GDSL esterase/lipase At2g40250 (361 aa).

The first 28 residues, 1-28 (MNRNQHKPMFVTFLINILLLQLLNLTNA), serve as a signal peptide directing secretion. Catalysis depends on S43, which acts as the Nucleophile. Active-site residues include D337 and H340.

Belongs to the 'GDSL' lipolytic enzyme family.

The protein resides in the secreted. This Arabidopsis thaliana (Mouse-ear cress) protein is GDSL esterase/lipase At2g40250.